We begin with the raw amino-acid sequence, 679 residues long: tRNA uridine 5-carboxymethylaminomethyl modification enzyme MnmG (679 aa).

15 to 20 (GAGHAG) lines the FAD pocket. 314–328 (GPRYCPSIEDKIVRF) contributes to the NAD(+) binding site.

This sequence belongs to the MnmG family. In terms of assembly, homodimer. Heterotetramer of two MnmE and two MnmG subunits. FAD is required as a cofactor.

It is found in the cytoplasm. Its function is as follows. NAD-binding protein involved in the addition of a carboxymethylaminomethyl (cmnm) group at the wobble position (U34) of certain tRNAs, forming tRNA-cmnm(5)s(2)U34. The polypeptide is tRNA uridine 5-carboxymethylaminomethyl modification enzyme MnmG (Roseiflexus sp. (strain RS-1)).